The sequence spans 141 residues: Nucleoside triphosphatase NudI (141 aa).

The Nudix hydrolase domain occupies 1-141 (MRQRTIVCPL…RHTLRLKGLL (141 aa)). The Nudix box motif lies at 38–59 (GGVEPGERIEEALRREIREELG).

It belongs to the Nudix hydrolase family. NudI subfamily. As to quaternary structure, monomer. Requires Mg(2+) as cofactor.

It catalyses the reaction a ribonucleoside 5'-triphosphate + H2O = a ribonucleoside 5'-phosphate + diphosphate + H(+). The catalysed reaction is a 2'-deoxyribonucleoside 5'-triphosphate + H2O = a 2'-deoxyribonucleoside 5'-phosphate + diphosphate + H(+). It carries out the reaction dUTP + H2O = dUMP + diphosphate + H(+). The enzyme catalyses dTTP + H2O = dTMP + diphosphate + H(+). It catalyses the reaction dCTP + H2O = dCMP + diphosphate + H(+). Catalyzes the hydrolysis of nucleoside triphosphates, with a preference for pyrimidine deoxynucleoside triphosphates (dUTP, dTTP and dCTP). The polypeptide is Nucleoside triphosphatase NudI (Salmonella arizonae (strain ATCC BAA-731 / CDC346-86 / RSK2980)).